A 194-amino-acid chain; its full sequence is UPF0215 protein TV0037 (194 aa).

It belongs to the UPF0215 family.

The sequence is that of UPF0215 protein TV0037 from Thermoplasma volcanium (strain ATCC 51530 / DSM 4299 / JCM 9571 / NBRC 15438 / GSS1).